The chain runs to 172 residues: Keratin-associated protein 13-1 (172 aa).

5 consecutive repeat copies span residues 46 to 55 (CQLGSSLYRG), 56 to 65 (CQQTCWEPTS), 66 to 75 (CQTSYVESSP), 76 to 85 (CQTSCYRPRT), and 92 to 101 (CQTTYSGSLG). A 5 X 10 AA approximate repeats region spans residues 46–101 (CQLGSSLYRGCQQTCWEPTSCQTSYVESSPCQTSCYRPRTSLLCSPCQTTYSGSLG).

The protein belongs to the PMG family. As to quaternary structure, interacts with hair keratins. In terms of tissue distribution, weak expression seen in the late matrix and entire cortex area of the hair follicle.

In terms of biological role, in the hair cortex, hair keratin intermediate filaments are embedded in an interfilamentous matrix, consisting of hair keratin-associated proteins (KRTAP), which are essential for the formation of a rigid and resistant hair shaft through their extensive disulfide bond cross-linking with abundant cysteine residues of hair keratins. The matrix proteins include the high-sulfur and high-glycine-tyrosine keratins. In Homo sapiens (Human), this protein is Keratin-associated protein 13-1 (KRTAP13-1).